The following is a 356-amino-acid chain: Leucine carboxyl methyltransferase 1 (356 aa).

Residues Arg-78, Gly-101, Asp-127, Asp-183–Leu-184, and Glu-218 contribute to the S-adenosyl-L-methionine site.

It belongs to the methyltransferase superfamily. LCMT family.

The enzyme catalyses [phosphatase 2A protein]-C-terminal L-leucine + S-adenosyl-L-methionine = [phosphatase 2A protein]-C-terminal L-leucine methyl ester + S-adenosyl-L-homocysteine. In terms of biological role, methylates the carboxyl group of the C-terminal leucine residue of protein phosphatase 2A catalytic subunits to form alpha-leucine ester residues. The chain is Leucine carboxyl methyltransferase 1 (PPM1) from Cryptococcus neoformans var. neoformans serotype D (strain JEC21 / ATCC MYA-565) (Filobasidiella neoformans).